Here is a 185-residue protein sequence, read N- to C-terminus: Elongation factor P (185 aa).

This sequence belongs to the elongation factor P family.

Its subcellular location is the cytoplasm. It participates in protein biosynthesis; polypeptide chain elongation. Functionally, involved in peptide bond synthesis. Stimulates efficient translation and peptide-bond synthesis on native or reconstituted 70S ribosomes in vitro. Probably functions indirectly by altering the affinity of the ribosome for aminoacyl-tRNA, thus increasing their reactivity as acceptors for peptidyl transferase. In Caldicellulosiruptor bescii (strain ATCC BAA-1888 / DSM 6725 / KCTC 15123 / Z-1320) (Anaerocellum thermophilum), this protein is Elongation factor P.